Here is a 368-residue protein sequence, read N- to C-terminus: MNKLNWRRIVLKVGSALIAPDQDGCRSRYILTIAQFIVRCRARGIEVILVSSGSVAAGAHLFPSDTARSVVMKKAMAAAGQTEMIAMWDRFFDFPSAQLLLTHGDLRDHERYQSIRETVFTLLEHGVLPIINENDAVTTDDLKVGDNDNLSAMVAAAADADALLIFSDVDGLYDKNPNLHDDAILLPEIKSIDDSIYAMAGCATSAVGTGGMKTKIEAAEKATSHGISTYIINGFKEETFTRLLAGENPGTIFLPYEKPMQDSVHWMTHTANEQGEVVVDGSFDKSLEGETGCIRGDEIMAVHGEFAIGDTILVRSEDGTRLAKATANYSSCLLSFIADNEQSEFSEKMQDSIGPVISEKHIALLEKS.

ATP is bound at residue lysine 12. 3 residues coordinate substrate: serine 52, aspartate 135, and asparagine 147. ATP-binding positions include 167 to 168 and 209 to 215; these read SD and TGGMKTK. In terms of domain architecture, PUA spans 274 to 348; that stretch reads QGEVVVDGSF…DNEQSEFSEK (75 aa).

Belongs to the glutamate 5-kinase family.

The protein resides in the cytoplasm. It carries out the reaction L-glutamate + ATP = L-glutamyl 5-phosphate + ADP. It functions in the pathway amino-acid biosynthesis; L-proline biosynthesis; L-glutamate 5-semialdehyde from L-glutamate: step 1/2. Catalyzes the transfer of a phosphate group to glutamate to form L-glutamate 5-phosphate. This chain is Glutamate 5-kinase 1, found in Pseudoalteromonas translucida (strain TAC 125).